The chain runs to 438 residues: MIHTIRLYIEKYRLLSEDRPVLVGLSGGADSVALLGVLVRLGYPCIALHCNFHLRGEESDRDEAFACEFAESLEVPFHKIDFDTISYAGERHLSIEMAARELRYAWFEEMRERLGGQATAVAHHRDDNVETVLMNLIRGTGIRGMSGIRPRNGFIVRPLLCVSREDILAWLADQGYAYMVDSTNLSDAYTRNFIRLNVLPLLEEINPSARNTIARSAEHLSAAETIYIYVLEQARKEVVVSDDRLSIGALMRFPAPETILYELLKEYGFTRLVSDDIFAALTKEPGKLFYSSTHRLLKDRDYLWITSLEKKEKRTFVLDPEKGINHEPIELSFQKLVITIDFPIEKNKRIAYLDYDKLDFPLTLRTWKEGDWFIPFGMKGRKKLSDYFSDHKFSRIEKERTWLLCSGDAIVWVVGERTDNRFRIDESTKRVLIVNFLG.

26 to 31 contacts ATP; the sequence is SGGADS.

Belongs to the tRNA(Ile)-lysidine synthase family.

Its subcellular location is the cytoplasm. It carries out the reaction cytidine(34) in tRNA(Ile2) + L-lysine + ATP = lysidine(34) in tRNA(Ile2) + AMP + diphosphate + H(+). Functionally, ligates lysine onto the cytidine present at position 34 of the AUA codon-specific tRNA(Ile) that contains the anticodon CAU, in an ATP-dependent manner. Cytidine is converted to lysidine, thus changing the amino acid specificity of the tRNA from methionine to isoleucine. This chain is tRNA(Ile)-lysidine synthase, found in Parabacteroides distasonis (strain ATCC 8503 / DSM 20701 / CIP 104284 / JCM 5825 / NCTC 11152).